Reading from the N-terminus, the 256-residue chain is Probable ABC transporter ATP-binding protein SPy_0285/M5005_Spy0242 (256 aa).

The region spanning 4–246 (LEINNLHVSI…EKEGYAGIAQ (243 aa)) is the ABC transporter domain. 36-43 (GPNGTGKS) contributes to the ATP binding site.

This sequence belongs to the ABC transporter superfamily. Ycf16 family.

Its subcellular location is the cell membrane. In Streptococcus pyogenes serotype M1, this protein is Probable ABC transporter ATP-binding protein SPy_0285/M5005_Spy0242.